The following is a 390-amino-acid chain: Altered inheritance of mitochondria protein 6 (390 aa).

Residues 1–17 (MLGLKGCLTILIGYVIA) form the signal peptide.

It belongs to the AIM6 family.

The chain is Altered inheritance of mitochondria protein 6 from Saccharomyces cerevisiae (strain ATCC 204508 / S288c) (Baker's yeast).